The sequence spans 257 residues: 1-(5-phosphoribosyl)-5-[(5-phosphoribosylamino)methylideneamino] imidazole-4-carboxamide isomerase (257 aa).

Catalysis depends on Asp8, which acts as the Proton acceptor. The active-site Proton donor is the Asp130.

It belongs to the HisA/HisF family.

The protein localises to the cytoplasm. The enzyme catalyses 1-(5-phospho-beta-D-ribosyl)-5-[(5-phospho-beta-D-ribosylamino)methylideneamino]imidazole-4-carboxamide = 5-[(5-phospho-1-deoxy-D-ribulos-1-ylimino)methylamino]-1-(5-phospho-beta-D-ribosyl)imidazole-4-carboxamide. Its pathway is amino-acid biosynthesis; L-histidine biosynthesis; L-histidine from 5-phospho-alpha-D-ribose 1-diphosphate: step 4/9. This is 1-(5-phosphoribosyl)-5-[(5-phosphoribosylamino)methylideneamino] imidazole-4-carboxamide isomerase from Chlorobium chlorochromatii (strain CaD3).